We begin with the raw amino-acid sequence, 313 residues long: Solute carrier family 35 member E3 (313 aa).

9 consecutive transmembrane segments (helical) span residues 17–37, 40–60, 77–97, 126–143, 153–173, 187–206, 225–245, 252–272, and 275–295; these read GLLF…WIYV, GFPN…GLYI, LLLL…SLQN, FSTR…GVIL, FLGM…QVWV, LLYY…VPFF, LMVL…YWII, TYNM…YVLF, and PLSI…LAYT.

It belongs to the TPT transporter family. SLC35E subfamily.

It localises to the membrane. In terms of biological role, putative transporter. The polypeptide is Solute carrier family 35 member E3 (SLC35E3) (Homo sapiens (Human)).